A 469-amino-acid chain; its full sequence is Light-independent protochlorophyllide reductase subunit N (469 aa).

Residues Cys24, Cys49, and Cys109 each contribute to the [4Fe-4S] cluster site.

The protein belongs to the BchN/ChlN family. As to quaternary structure, protochlorophyllide reductase is composed of three subunits; ChlL, ChlN and ChlB. Forms a heterotetramer of two ChlB and two ChlN subunits. The cofactor is [4Fe-4S] cluster.

It carries out the reaction chlorophyllide a + oxidized 2[4Fe-4S]-[ferredoxin] + 2 ADP + 2 phosphate = protochlorophyllide a + reduced 2[4Fe-4S]-[ferredoxin] + 2 ATP + 2 H2O. It participates in porphyrin-containing compound metabolism; chlorophyll biosynthesis (light-independent). Functionally, component of the dark-operative protochlorophyllide reductase (DPOR) that uses Mg-ATP and reduced ferredoxin to reduce ring D of protochlorophyllide (Pchlide) to form chlorophyllide a (Chlide). This reaction is light-independent. The NB-protein (ChlN-ChlB) is the catalytic component of the complex. This chain is Light-independent protochlorophyllide reductase subunit N, found in Gloeobacter violaceus (strain ATCC 29082 / PCC 7421).